A 650-amino-acid polypeptide reads, in one-letter code: Leukocyte immunoglobulin-like receptor subfamily B member 1 (650 aa).

The signal sequence occupies residues 1–23 (MTPILTVLICLGLSLGPRTHVQA). Over 24–461 (GHLPKPTLWA…QSGLGRHLGV (438 aa)) the chain is Extracellular. Ig-like C2-type domains follow at residues 27-115 (PKPT…DPLE), 116-221 (LVVT…LVLG), 222-312 (VSKK…APSD), and 313-409 (PLDI…YLLT). 4 disulfide bridges follow: C49/C98, C145/C197, C157/C167, and C246/C297. N-linked (GlcNAc...) asparagine glycosylation is found at N281, N302, and N341. Cysteines 346 and 397 form a disulfide. The interval 415-451 (LELVVSGPSGGPSSPTTGPTSTSGPEDQPLTPTGSDP) is disordered. Residues 425–439 (GPSSPTTGPTSTSGP) show a composition bias toward low complexity. Residues 462-482 (VIGILVAVILLLLLLLLLFLI) traverse the membrane as a helical segment. Residues 483 to 650 (LRHRRQGKHW…PSIYATLAIH (168 aa)) are Cytoplasmic-facing. The tract at residues 491–524 (HWTSTQRKADFQHPAGAVGPEPTDRGLQWRSSPA) is disordered. 2 consecutive short sequence motifs (ITIM motif) follow at residues 531-536 (NLYAAV) and 560-565 (VTYAEV). Position 533 is a phosphotyrosine (Y533). Residues 563–650 (AEVKHSRPRR…PSIYATLAIH (88 aa)) are disordered. Composition is skewed to basic and acidic residues over residues 564–574 (EVKHSRPRREM) and 586–600 (LDTKDRQAEEDRQMD). 2 consecutive short sequence motifs (ITIM motif) follow at residues 612–617 (VTYAQL) and 642–647 (SIYATL). Phosphotyrosine occurs at positions 614 and 644.

Binds PTPN6 when phosphorylated. Binds FCER1A and FCGR1A. Interacts with human cytomegalovirus/HHV-5 protein UL18. Interacts with peptide-bound HLA-G-B2M complex. Interacts with peptide-bound HLA-F-B2M complex but not with peptide-free HLA-F open conformer. It does not probe the peptide sequence directly. Phosphorylated on tyrosine residues. Dephosphorylated by PTPN6. Expressed in B cells, monocytes and various dendritic cell (DC) subsets including myeloid, plasmacytoid and tolerogenic DCs (at protein level). Expressed in decidual macrophages (at protein level). Expressed in decidual NK cells (at protein level).

It localises to the cell membrane. Its subcellular location is the secreted. Its function is as follows. Receptor for class I MHC antigens. Recognizes a broad spectrum of HLA-A, HLA-B, HLA-C, HLA-G and HLA-F alleles. Receptor for H301/UL18, a human cytomegalovirus class I MHC homolog. Ligand binding results in inhibitory signals and down-regulation of the immune response. Engagement of LILRB1 present on natural killer cells or T-cells by class I MHC molecules protects the target cells from lysis. Interaction with HLA-B or HLA-E leads to inhibition of FCER1A signaling and serotonin release. Inhibits FCGR1A-mediated phosphorylation of cellular proteins and mobilization of intracellular calcium ions. Recognizes HLA-G in complex with B2M/beta-2 microglobulin and a nonamer self-peptide. Upon interaction with peptide-bound HLA-G-B2M complex, triggers secretion of growth-promoting factors by decidual NK cells. Reprograms B cells toward an immune suppressive phenotype. The sequence is that of Leukocyte immunoglobulin-like receptor subfamily B member 1 from Homo sapiens (Human).